A 340-amino-acid chain; its full sequence is Phenylalanine--tRNA ligase alpha subunit (340 aa).

Glu258 lines the Mg(2+) pocket.

It belongs to the class-II aminoacyl-tRNA synthetase family. Phe-tRNA synthetase alpha subunit type 1 subfamily. As to quaternary structure, tetramer of two alpha and two beta subunits. Mg(2+) serves as cofactor.

It is found in the cytoplasm. The catalysed reaction is tRNA(Phe) + L-phenylalanine + ATP = L-phenylalanyl-tRNA(Phe) + AMP + diphosphate + H(+). This chain is Phenylalanine--tRNA ligase alpha subunit, found in Corynebacterium efficiens (strain DSM 44549 / YS-314 / AJ 12310 / JCM 11189 / NBRC 100395).